A 110-amino-acid polypeptide reads, in one-letter code: Probable ribonuclease HepT (110 aa).

Catalysis depends on residues arginine 75 and histidine 80. The RX(4)HXY motif motif lies at 75–82; the sequence is RDKLIHAY. The residue at position 82 (tyrosine 82) is an O-di-AMP-tyrosine.

The protein belongs to the HepT RNase toxin family. Post-translationally, modified by cognate antitoxin MntA; probably at least 2 successive AMPylation events occur on Tyr-82.

In terms of biological role, toxic component of a type VII toxin-antitoxin (TA) system. Overexpression in E.coli inhibits cell growth. Neutralized by cognate antitoxin MntA. Neutralization is probably due to AMPylation by MntA. Probably an RNAase. This is Probable ribonuclease HepT from Thermococcus cleftensis (strain DSM 27260 / KACC 17922 / CL1).